A 1183-amino-acid chain; its full sequence is Formin-like protein (1183 aa).

2 disordered regions span residues 1 to 44 and 63 to 82; these read MGAV…SISS and QHVRQPSLRSRSQQPMPTTD. Over residues 23 to 36 the composition is skewed to basic residues; it reads PHSHAHHHSMRNGH. The segment covering 63 to 79 has biased composition (polar residues); sequence QHVRQPSLRSRSQQPMP. Positions 76–559 constitute a GBD/FH3 domain; the sequence is QPMPTTDELD…HNEQELKKRD (484 aa). At serine 225 the chain carries Phosphoserine. A compositionally biased stretch (polar residues) spans 572–584; that stretch reads LSRSLPRSASSGD. Positions 572 to 681 are disordered; the sequence is LSRSLPRSAS…PPVAGFMPAP (110 aa). Composition is skewed to pro residues over residues 605–614 and 622–640; these read LPPPPPPMPA and APPPPPPPAPPAPPPPPGF. Residues 641-654 are compositionally biased toward low complexity; that stretch reads SPLGSPSGSLASTA. The 402-residue stretch at 687–1088 folds into the FH2 domain; it reads IKRKVPTKYK…AALAASKKEN (402 aa). In terms of domain architecture, DAD spans 1136–1169; it reads DEVYNGALEDILLGLKSEPYRRADAVRRSQRRRI.

It belongs to the formin homology family. Self-associates. Interacts (via GBD/FH3 domain) with Cdc42; the interaction is stronger with the GTP bound form of Cdc42.

Its function is as follows. Together with Cdc42, involved in establishment of planar cell polarity in the developing compound eye by contributing to ommatidial rotation. Together with DAAM and Cdc42, has a role in neuronal development of mushroom bodies. This is Formin-like protein from Drosophila melanogaster (Fruit fly).